A 283-amino-acid chain; its full sequence is DNA repair protein RecO (283 aa).

This sequence belongs to the RecO family.

In terms of biological role, involved in DNA repair and RecF pathway recombination. The protein is DNA repair protein RecO of Gloeothece citriformis (strain PCC 7424) (Cyanothece sp. (strain PCC 7424)).